A 288-amino-acid polypeptide reads, in one-letter code: Histone H3-like centromeric protein hcp-3 (288 aa).

The segment at 96–194 (YHARKEQARR…VTKTRRYRPG (99 aa)) is disordered. Residues 178–193 (MRAGRNRVTKTRRYRP) show a composition bias toward basic residues. Residues 191–288 (YRPGQKALEE…LYRRLCLRHL (98 aa)) are H3-like.

It belongs to the histone H3 family. As to quaternary structure, forms a nucleosome-like histone octamer containing two molecules each of H2A, H2B, hcp-3 and H4 assembled in one hcp-3-H4 heterotetramer and two H2A-H2B heterodimers. The hcp-3-H4 heterotetramer is more compact and structurally more rigid than corresponding H3-H4 heterotetramers. Interacts with knl-2. Interacts with lin-53.

The protein localises to the nucleus. It localises to the chromosome. Its subcellular location is the centromere. The protein resides in the kinetochore. In terms of biological role, histone H3-like variant which exclusively replaces conventional H3 in the nucleosome core of centromeric chromatin at the inner plate of the kinetochore. Required for recruitment and assembly of kinetochore proteins, mitotic progression and chromosome segregation. May serve as an epigenetic mark that propagates centromere identity through replication and cell division. Might promote cleavage furrow stability during cytokinesis. Not required for chromosome segregation during meiosis. The sequence is that of Histone H3-like centromeric protein hcp-3 from Caenorhabditis elegans.